A 503-amino-acid polypeptide reads, in one-letter code: von Willebrand factor A domain-containing protein 1 (503 aa).

An N-terminal signal peptide occupies residues 1–21; the sequence is MEVRKALTCVFLTVFLCSGDA. The 178-residue stretch at 36 to 213 folds into the VWFA domain; the sequence is DVLFLLDSSG…IIGEDLRNSI (178 aa). 2 Fibronectin type-III domains span residues 218–324 and 331–423; these read RAER…TVNP and LLSS…VLPA.

As to quaternary structure, homodimer or homomultimer; disulfide-linked.

The protein localises to the secreted. Its subcellular location is the extracellular space. It is found in the extracellular matrix. The protein resides in the basement membrane. Promotes matrix assembly. Involved in the organization of skeletal muscles and in the formation of neuromuscular junctions. The sequence is that of von Willebrand factor A domain-containing protein 1 from Danio rerio (Zebrafish).